The chain runs to 313 residues: Porphobilinogen deaminase (313 aa).

S-(dipyrrolylmethanemethyl)cysteine is present on cysteine 242.

The protein belongs to the HMBS family. As to quaternary structure, monomer. The cofactor is dipyrromethane.

It catalyses the reaction 4 porphobilinogen + H2O = hydroxymethylbilane + 4 NH4(+). The protein operates within porphyrin-containing compound metabolism; protoporphyrin-IX biosynthesis; coproporphyrinogen-III from 5-aminolevulinate: step 2/4. In terms of biological role, tetrapolymerization of the monopyrrole PBG into the hydroxymethylbilane pre-uroporphyrinogen in several discrete steps. This Yersinia pseudotuberculosis serotype O:1b (strain IP 31758) protein is Porphobilinogen deaminase.